Here is an 81-residue protein sequence, read N- to C-terminus: ESVTCKACEYVVKKVMELIDNNRTEEKIIHALDSVCALLPESVSEVCQEVVDTYGDSIVALLLQEMSPELVCSELGLCMSG.

The region spanning 1–81 (ESVTCKACEY…CSELGLCMSG (81 aa)) is the Saposin B-type domain. Disulfide bonds link C5-C78, C8-C72, and C36-C47. N-linked (GlcNAc...) asparagine glycosylation occurs at N22.

Saposin-A and saposin-C stimulate the hydrolysis of glucosylceramide by beta-glucosylceramidase (EC 3.2.1.45) and galactosylceramide by beta-galactosylceramidase (EC 3.2.1.46). Saposin-C apparently acts by combining with the enzyme and acidic lipid to form an activated complex, rather than by solubilizing the substrate. This chain is Saposin-C (PSAP), found in Cavia porcellus (Guinea pig).